The following is a 652-amino-acid chain: Acetyl-coenzyme A synthetase (652 aa).

Residues 191–194, Thr311, and Asn335 each bind CoA; that span reads RAGR. Residues 387–389, 411–416, Asp500, and Arg515 each bind ATP; these read GEP and DTWWQT. Ser523 lines the CoA pocket. Position 526 (Arg526) interacts with ATP. 3 residues coordinate Mg(2+): Val537, His539, and Ile542. Arg584 lines the CoA pocket. Position 609 is an N6-acetyllysine (Lys609).

It belongs to the ATP-dependent AMP-binding enzyme family. The cofactor is Mg(2+). Acetylated. Deacetylation by the SIR2-homolog deacetylase activates the enzyme.

It carries out the reaction acetate + ATP + CoA = acetyl-CoA + AMP + diphosphate. Its function is as follows. Catalyzes the conversion of acetate into acetyl-CoA (AcCoA), an essential intermediate at the junction of anabolic and catabolic pathways. Acs undergoes a two-step reaction. In the first half reaction, Acs combines acetate with ATP to form acetyl-adenylate (AcAMP) intermediate. In the second half reaction, it can then transfer the acetyl group from AcAMP to the sulfhydryl group of CoA, forming the product AcCoA. Enables the cell to use acetate during aerobic growth to generate energy via the TCA cycle, and biosynthetic compounds via the glyoxylate shunt. Acetylates CheY, the response regulator involved in flagellar movement and chemotaxis. This is Acetyl-coenzyme A synthetase from Serratia proteamaculans (strain 568).